A 379-amino-acid chain; its full sequence is Chaperone protein DnaJ (379 aa).

In terms of domain architecture, J spans 5–71 (DYYEILGVSR…EKRAMYDRFG (67 aa)). A CR-type zinc finger spans residues 149–231 (GTTIPIEYDR…CGGSGRIRKR (83 aa)). 8 residues coordinate Zn(2+): Cys162, Cys165, Cys179, Cys182, Cys205, Cys208, Cys219, and Cys222. CXXCXGXG motif repeat units lie at residues 162–169 (CSHCNGEG), 179–186 (CPKCHGTG), 205–212 (CNQCGGTG), and 219–226 (CHVCGGSG).

The protein belongs to the DnaJ family. As to quaternary structure, homodimer. Zn(2+) is required as a cofactor.

It is found in the cytoplasm. Functionally, participates actively in the response to hyperosmotic and heat shock by preventing the aggregation of stress-denatured proteins and by disaggregating proteins, also in an autonomous, DnaK-independent fashion. Unfolded proteins bind initially to DnaJ; upon interaction with the DnaJ-bound protein, DnaK hydrolyzes its bound ATP, resulting in the formation of a stable complex. GrpE releases ADP from DnaK; ATP binding to DnaK triggers the release of the substrate protein, thus completing the reaction cycle. Several rounds of ATP-dependent interactions between DnaJ, DnaK and GrpE are required for fully efficient folding. Also involved, together with DnaK and GrpE, in the DNA replication of plasmids through activation of initiation proteins. The polypeptide is Chaperone protein DnaJ (Thermosipho africanus (strain TCF52B)).